A 216-amino-acid polypeptide reads, in one-letter code: Transmembrane emp24 domain-containing protein eca (216 aa).

The first 20 residues, 1 to 20 (MRDQFISLALILCVLHSACG), serve as a signal peptide directing secretion. Residues 21–182 (LYFHISETER…FRHTSESTNS (162 aa)) are Lumenal-facing. One can recognise a GOLD domain in the interval 30–126 (RKCFIEEVPD…QLRVHLDIQV (97 aa)). Positions 134–164 (ANVAQKEKLTELQLRIRQLLDQVEQITKEQN) form a coiled coil. The helical transmembrane segment at 183–203 (RVLWWSLAQTIVLVCMGFWQM) threads the bilayer. The Cytoplasmic portion of the chain corresponds to 204–216 (RHLKSFFEAKKLV). The Prevents secretion from ER signature appears at 213 to 216 (KKLV).

Belongs to the EMP24/GP25L family.

The protein localises to the endoplasmic reticulum membrane. Functionally, eca and bai are essential, though not redundant, for dorsoventral patterning of the embryo. Specifically required during early embryogenesis for the activity of maternal tkv, while the zygotic tkv is not affected. Involved in Golgi organization. The sequence is that of Transmembrane emp24 domain-containing protein eca from Drosophila sechellia (Fruit fly).